We begin with the raw amino-acid sequence, 3014 residues long: MSTNPKPQRKTKRNTNRRPQDVKFPGGGQIVGGVYLLPRRGPKLGVRATRKNSERSQPRGRRQPIPKARRPTGRSWGQPGYPWPLYANEGLGWAGWLLSPRSSRPNWGPNDPRRKSPNLGRVIHTLTCGFPHLMGYIPLVGGPVGGVSRALAHGVKVLEDGINYATGNLPGCPFSIFVLALLWCLTVPASAVPYRNASGVYHVTNDCPNSSIVYEADNLILHAPGCVPCVLEDNVSRCWVQITPTLSAPSFGAVTALLRRAVDYLAGGAAFCSALYVGDACGALSLVGQMFTYKPRQHTTVQDCNCSIYSGHITGHRMAWDMMMKWSPTTALLMAQLLRIPQVVIDIIAGGHWGVLLAAAYFASTANWAKVILVLFLFAGVDGRTHTVGGTVGQGLKSLTSFFNPGPQRQLQFVNTNGSWHINSTALNCNDSLQTGFIAGLMYAHKFNSSGCPERMSSCRPLAAFDQGWGTISYATISGPSDDKPYCWHYPPRPCGVVPARDVCGPVYCFTPSPVVVGTTDRRGCPTYNWGSNETDILLLNNIRPPAGNWFGCTWMNSTGFVKNCGAPPCNLGPTGNNSLKCPTDCFRKHPDATYTRCGSGPWLTPRCLVHYPYRLWHYPCTVNYTIFKVRMFIGGLEHRLEAACNWTYGERCDLEDRDRAELSPLLHTTTQWAILPCSFTPTPALSTGLIHLHQNIVDTQYLYGLSSSIVSWAVKWEYIMLVFLLLADARICTCLLILLLICQAEATCKNVIVLNAAAAAGNHGFFWGLLVVCLAWHVKGRLVPGATYLCLGVWPLLLVRLLRPHRALALDSSDGGTVGCLVLIVLTIFTLTPGYKKKVVLVMWWLQYFIARVEAIIHVWVPPLQVKGGRDAVIMLTCLFHPALGFEITKILFGILGPLYLLQHSLTKVPYFLRARALLRLCLLAKHLVYGKYVQAALLHLGRLTGTYIYDHLAPMKDWAASGLRELTVATEPIVFSAMETKVITWGADTAACGNILAVLPVSARRGREIFLGPADDIKTSGWRLLAPITAYAQQTRGVLGAIVLSLTGRDKNEAEGEVQFLSTATQTFLGICINGVMWTLFHGAGSKTLAGPKGPVVQMYTNVDKDLVGWPSPPGKGSLTRCTCGSADLYLVTRHADVIPARRRGDTRASLLSPRPISYLKGSSGGPIMCPSGHVVGVFRAAVCTRGVAKALEFVPVENLETTMRSPVFTDNSTPPAVPHEFQVGHLHAPTGSGKSTKVPAAYAAQGYKVLVLNPSVAATFGFGAYMSRAYGVDPNIRTGVRTVTTGAGITYSTYGKFFADGGCSGGAYDVIICDECHSQDATTILGIGTVLDQAETAGARLVVLATAIPPGSVTTPHPNIEEVALPSEGEIPFYGRAIPLVLIKGGRHLIFCHSKKKCDELAKQLTSLGVNAVAYYRGLDVAVIPATGDVVVCSTDALMTGFTGDFDSVIDCNSAVTQTVDFSLDPTFTIETTTVPQDAVSRSQRRGRTGRGRHGIYRYVSSGERPSGIFDSVVLCECYDAGCAWYDLTPAETTVRLRAYLNTPGLPVCQEHLEFWEGVFTGLTNIDAHMLSQAKQGGENFPYLVAYQATVCVRAKAPPPSWDTMWKCMICLKPTLTGPTPLLYRLGAVQNEITLTHPITKYIMACMSADLEVITSTWVLVGGVVAALAAYCLTVGSVAIVGRIILSGRPAITPDREVLYQQFDEMEECSASLPYVDEARAIAGQFKEKVLGLIGTAGQKAETLKPAATSMWSKAEQFWAKHMWNFVSGIQYLAGLSTLPGNPAVATLMSFTAAVTSPLTTHQTLLFNILGGWVASQIAPPTAATAFVVSGMAGAAVGNIGLGRVLIDILAGYGTGVAGALVAFKIMCGERPTAEELVNLLPSILCPGALVVGVICAAVLRRHIGPGEGAVQWMNRLIAFASRGNHGSPTHYVPETDASAKVTQLLSSLTVTSLLKRLHTWIGEDYSTPCDGTWLRAIWDWVCTALTDFKAWLQAKLLPQLPGVPFFSCQKGYKGVWRGDGVNSTKCPCGATISGHVKNGTMRIVGPKLCSNTWQGTFPINATTTGPSVPAPAPNYKFALWRVGAADYAEVRRVGDYHYITGVTQDNLKCPCQVPSPEFFTELDGVRIHRFAPPCNPLLREEVTFSVGLHSYVVGSQLPCEPEPDVTVLTSMLSDPAHITAETAKRRLNRGSPPSLANSSASQLSAPSLKATCTIQGHHPDADLIKANLLWRQCMGGNITRVEAENKVEILDCFKPLKEEEDDREISVSADCFKKGPAFPPALPVWARPGYDPPLLETWKRPDYDPPQVWGCPIPPAGPPPVPLPRRKRKPMELSDSTVSQVMADLADARFKVDTPSIEGQDSALGTSSQHDSGPEEKRDDNSDAASYSSMPPLEGEPGDPDLSSGSWSTVSGEDNVVCCSMSYTWTGALITPCSAEEEKLPINPLSNTLLRHHNLVYSTSSRSAGLRQKKVTFDRLQVLDDHYREVVDEMKRLASKVKARLLPLEEACGLTPPHSARSKYGYGAKEVRSLDKKALKHIEGVWQDLLDDSDTPLPTTIMAKNEVFAVEPSKGGKKPARLIVYPDLGVRVCEKRALYDVAQKLPTALMGPSYGFQYSPAQRVDFLLKAWKSKKIPMAFSYDTRCFDSTITEHDIMTEESIYQSCDLQPEARVAIRSLTQRLYCGGPMYNSKGQQCGYRRCRASGVFTTSMGNTMTCYIKALASCRAAKLRDCTLLVCGDDLVAICESQGTHEDEASLRAFTEAMTRYSAPPGDPPVPAYDLELVTSCSSNVSVARDASGNRIYYLTRDPQVPLAKAAWETAKHSPVNSWLGNIIMYAPTLWARIVLMTHFFSVLQSQEQLEKTLAFEMYGSVYSVTPLDLPAIIQRLHGLSAFSLHSYSPSEINRVASCLRKLGVPPLRAWRHRARAVRAKLIAQGGRAAICGIYLFNWAVKTKRKLTPLADADRLDLSSWFTVGAGGGDIYHSMSRARPRNLLLCLLLLSVGVGIFLLPAR.

S2 is modified (N-acetylserine; by host). Positions 2–23 are interaction with STAT1; sequence STNPKPQRKTKRNTNRRPQDVK. Residues 2–58 are interaction with EIF2AK2/PKR; sequence STNPKPQRKTKRNTNRRPQDVKFPGGGQIVGGVYLLPRRGPKLGVRATRKNSERSQP. Residues 2–59 are interaction with DDX3X; it reads STNPKPQRKTKRNTNRRPQDVKFPGGGQIVGGVYLLPRRGPKLGVRATRKNSERSQPR. Residues 2 to 75 form a disordered region; sequence STNPKPQRKT…PKARRPTGRS (74 aa). The Cytoplasmic segment spans residues 2–168; sequence STNPKPQRKT…EDGINYATGN (167 aa). 2 short sequence motifs (nuclear localization signal) span residues 5–13 and 38–43; these read PKPQRKTKR and PRRGPK. Over residues 7-16 the composition is skewed to basic residues; it reads PQRKTKRNTN. Position 53 is a phosphoserine; by host (S53). 2 consecutive short sequence motifs (nuclear localization signal) follow at residues 58–64 and 66–71; these read PRGRRQP and PKARRP. The span at 58 to 72 shows a compositional bias: basic residues; the sequence is PRGRRQPIPKARRPT. 2 positions are modified to phosphoserine; by host: S99 and S116. An important for endoplasmic reticulum and mitochondrial localization region spans residues 112–152; the sequence is PRRKSPNLGRVIHTLTCGFPHLMGYIPLVGGPVGGVSRALA. Positions 122-173 are interaction with APOA2; it reads VIHTLTCGFPHLMGYIPLVGGPVGGVSRALAHGVKVLEDGINYATGNLPGCP. An important for lipid droplets localization region spans residues 164–167; sequence YATG. The helical transmembrane segment at 169-189 threads the bilayer; the sequence is LPGCPFSIFVLALLWCLTVPA. Positions 178–191 are cleaved as a propeptide — ER anchor for the core protein, removed in mature form by host signal peptidase; the sequence is VLALLWCLTVPASA. The Lumenal segment spans residues 190 to 358; that stretch reads SAVPYRNASG…AGGHWGVLLA (169 aa). N-linked (GlcNAc...) asparagine; by host glycosylation is found at N196, N209, and N234. The important for fusion stretch occupies residues 265 to 296; sequence LAGGAAFCSALYVGDACGALSLVGQMFTYKPR. N305 carries an N-linked (GlcNAc...) asparagine; by host glycan. The chain crosses the membrane as a helical span at residues 359 to 379; sequence AAYFASTANWAKVILVLFLFA. Residues 380–726 lie on the Lumenal side of the membrane; it reads GVDGRTHTVG…WEYIMLVFLL (347 aa). Residues 385-412 are HVR1; sequence THTVGGTVGQGLKSLTSFFNPGPQRQLQ. N-linked (GlcNAc...) (high mannose) asparagine; by host glycosylation is found at N417, N423, and N430. 4 cysteine pairs are disulfide-bonded: C429–C553, C452–C459, C487–C495, and C504–C509. N448 is a glycosylation site (N-linked (GlcNAc...) asparagine; by host). The tract at residues 475-479 is HVR2; the sequence is ATISG. Residues 481-494 are CD81-binding 1; that stretch reads SDDKPYCWHYPPRP. N533 carries an N-linked (GlcNAc...) asparagine; by host glycan. The CD81-binding 2 stretch occupies residues 545 to 552; that stretch reads PPAGNWFG. N557 carries an N-linked (GlcNAc...) asparagine; by host glycan. A disulfide bond links C565 and C570. A glycan (N-linked (GlcNAc...) asparagine; by host) is linked at N578. Intrachain disulfides connect C582-C586, C598-C621, and C608-C645. N-linked (GlcNAc...) (high mannose) asparagine; by host glycosylation is found at N624 and N646. The cysteines at positions 653 and 678 are disulfide-linked. Residues 661–672 are PKR/eIF2-alpha phosphorylation homology domain (PePHD); sequence AELSPLLHTTTQ. A helical membrane pass occupies residues 727–747; sequence LADARICTCLLILLLICQAEA. Residues 748 to 758 lie on the Lumenal side of the membrane; that stretch reads TCKNVIVLNAA. A helical transmembrane segment spans residues 759–779; sequence AAAGNHGFFWGLLVVCLAWHV. Topologically, residues 780-783 are cytoplasmic; the sequence is KGRL. The helical transmembrane segment at 784–804 threads the bilayer; it reads VPGATYLCLGVWPLLLVRLLR. The Lumenal portion of the chain corresponds to 805–814; that stretch reads PHRALALDSS. A helical transmembrane segment spans residues 815–835; it reads DGGTVGCLVLIVLTIFTLTPG. The Cytoplasmic portion of the chain corresponds to 836 to 882; sequence YKKKVVLVMWWLQYFIARVEAIIHVWVPPLQVKGGRDAVIMLTCLFH. The chain crosses the membrane as a helical span at residues 883-903; that stretch reads PALGFEITKILFGILGPLYLL. Residues 904–929 lie on the Lumenal side of the membrane; that stretch reads QHSLTKVPYFLRARALLRLCLLAKHL. A Peptidase C18 domain is found at 904-1027; sequence QHSLTKVPYF…DIKTSGWRLL (124 aa). A protease NS2-3 region spans residues 905 to 1207; it reads HSLTKVPYFL…PVENLETTMR (303 aa). C923 carries S-palmitoyl cysteine; by host lipidation. A helical membrane pass occupies residues 930-950; that stretch reads VYGKYVQAALLHLGRLTGTYI. An interaction with host SCPS1 region spans residues 930–950; it reads VYGKYVQAALLHLGRLTGTYI. Topologically, residues 951–1658 are cytoplasmic; that stretch reads YDHLAPMKDW…CMSADLEVIT (708 aa). Residues H953, E973, and C994 each act as for protease NS2 activity; shared with dimeric partner in the active site. The 182-residue stretch at 1028–1209 folds into the Peptidase S29 domain; sequence APITAYAQQT…ENLETTMRSP (182 aa). Residues H1084 and D1108 each act as charge relay system; for serine protease NS3 activity in the active site. Zn(2+)-binding residues include C1124 and C1126. Catalysis depends on S1166, which acts as the Charge relay system; for serine protease NS3 activity. 2 residues coordinate Zn(2+): C1172 and H1176. One can recognise a Helicase ATP-binding domain in the interval 1218–1351; sequence PAVPHEFQVG…ARLVVLATAI (134 aa). ATP is bound at residue 1231 to 1238; that stretch reads APTGSGKS. S1238 and E1318 together coordinate Mg(2+). The DECH box signature appears at 1317-1320; the sequence is DECH. The Helicase C-terminal domain occupies 1362–1539; it reads NIEEVALPSE…DLTPAETTVR (178 aa). The RNA-binding stretch occupies residues 1487–1499; it reads QRRGRTGRGRHGI. The helical transmembrane segment at 1659 to 1679 threads the bilayer; sequence STWVLVGGVVAALAAYCLTVG. An NS3-binding region spans residues 1680-1691; sequence SVAIVGRIILSG. The Cytoplasmic portion of the chain corresponds to 1680-1806; the sequence is SVAIVGRIIL…AVTSPLTTHQ (127 aa). The helical transmembrane segment at 1807–1827 threads the bilayer; it reads TLLFNILGGWVASQIAPPTAA. At 1828 to 1829 the chain is on the lumenal side; it reads TA. The helical transmembrane segment at 1830 to 1850 threads the bilayer; the sequence is FVVSGMAGAAVGNIGLGRVLI. A topological domain (cytoplasmic) is located at residue D1851. A helical membrane pass occupies residues 1852–1872; it reads ILAGYGTGVAGALVAFKIMCG. The Lumenal portion of the chain corresponds to 1873 to 1882; that stretch reads ERPTAEELVN. A helical transmembrane segment spans residues 1883 to 1903; the sequence is LLPSILCPGALVVGVICAAVL. Residues 1904–1973 lie on the Cytoplasmic side of the membrane; it reads RRHIGPGEGA…WIGEDYSTPC (70 aa). C1973 carries S-palmitoyl cysteine; by host lipidation. Residues 1974-2003 lie within the membrane without spanning it; that stretch reads DGTWLRAIWDWVCTALTDFKAWLQAKLLPQ. At 2004 to 2993 the chain is on the cytoplasmic side; sequence LPGVPFFSCQ…YHSMSRARPR (990 aa). The Zn(2+) site is built by C2012, C2030, C2032, and C2053. The FKBP8-binding stretch occupies residues 2121-2209; that stretch reads EFFTELDGVR…ANSSASQLSA (89 aa). The transcriptional activation stretch occupies residues 2121 to 2334; the sequence is EFFTELDGVR…VPLPRRKRKP (214 aa). Residues 2136 to 2140 are interaction with non-structural protein 4A; it reads PPCNP. The interaction with host SKP2 stretch occupies residues 2190–2441; sequence RLNRGSPPSL…ALITPCSAEE (252 aa). S2195, S2198, S2202, S2205, S2208, and S2211 each carry phosphoserine; by host. Residues 2211–2250 form an ISDR region; the sequence is SLKATCTIQGHHPDADLIKANLLWRQCMGGNITRVEAENK. The tract at residues 2211-2276 is interaction with EIF2AK2/PKR; sequence SLKATCTIQG…REISVSADCF (66 aa). The tract at residues 2250-2307 is NS4B-binding; it reads KVEILDCFKPLKEEEDDREISVSADCFKKGPAFPPALPVWARPGYDPPLLETWKRPDY. Positions 2300–2378 are V3; that stretch reads ETWKRPDYDP…GTSSQHDSGP (79 aa). Disordered stretches follow at residues 2315–2342 and 2359–2412; these read CPIP…DSTV and PSIE…GSWS. The span at 2316 to 2327 shows a compositional bias: pro residues; the sequence is PIPPAGPPPVPL. Residues 2323-2326 carry the SH3-binding motif; that stretch reads PPVP. Residues 2328–2337 carry the Nuclear localization signal motif; the sequence is PRRKRKPMEL. The span at 2361–2375 shows a compositional bias: polar residues; the sequence is IEGQDSALGTSSQHD. Residues 2376–2385 show a composition bias toward basic and acidic residues; sequence SGPEEKRDDN. Phosphoserine; by host is present on S2465. Residues 2637 to 2755 form the RdRp catalytic domain; that stretch reads PMAFSYDTRC…ICESQGTHED (119 aa). Residues D2643, D2741, and D2742 each coordinate Mg(2+). Residues 2994 to 3014 form a helical membrane-spanning segment; sequence NLLLCLLLLSVGVGIFLLPAR.

Belongs to the hepacivirus polyprotein family. In terms of assembly, homooligomer. Interacts with E1 (via C-terminus). Interacts with the non-structural protein 5A. Interacts (via N-terminus) with host STAT1 (via SH2 domain); this interaction results in decreased STAT1 phosphorylation and ubiquitin-mediated proteasome-dependent STAT1 degradation, leading to decreased IFN-stimulated gene transcription. Interacts with host STAT3; this interaction constitutively activates STAT3. Interacts with host LTBR receptor. Interacts with host TNFRSF1A receptor and possibly induces apoptosis. Interacts with host HNRPK. Interacts with host YWHAE. Interacts with host UBE3A/E6AP. Interacts with host DDX3X. Interacts with host APOA2. Interacts with host RXRA protein. Interacts with host SP110 isoform 3/Sp110b; this interaction sequesters the transcriptional corepressor SP110 away from the nucleus. Interacts with host CREB3 nuclear transcription protein; this interaction triggers cell transformation. Interacts with host ACY3. Interacts with host C1QR1. Interacts with host RBM24; this interaction, which enhances the interaction of the mature core protein with 5'-UTR, may inhibit viral translation and favor replication. Interacts with host EIF2AK2/PKR; this interaction induces the autophosphorylation of EIF2AK2. Part of the viral assembly initiation complex composed of NS2, E1, E2, NS3, NS4A, NS5A and the mature core protein. As to quaternary structure, forms a heterodimer with envelope glycoprotein E2. Interacts with mature core protein. Interacts with protease NS2. The heterodimer E1/E2 interacts with host CLDN1; this interaction plays a role in viral entry into host cell. Interacts with host SPSB2 (via C-terminus). Part of the viral assembly initiation complex composed of NS2, E1, E2, NS3, NS4A, NS5A and the mature core protein. Interacts with host NEURL3; this interaction prevents E1 binding to glycoprotein E2. Forms a heterodimer with envelope glycoprotein E1. Interacts with host CD81 and SCARB1 receptors; these interactions play a role in viral entry into host cell. Interacts with host EIF2AK2/PKR; this interaction inhibits EIF2AK2 and probably allows the virus to evade the innate immune response. Interacts with host CD209/DC-SIGN and CLEC4M/DC-SIGNR. Interact with host SPCS1; this interaction is essential for viral particle assembly. Interacts with protease NS2. The heterodimer E1/E2 interacts with host CLDN1; this interaction plays a role in viral entry into host cell. Part of the viral assembly initiation complex composed of NS2, E1, E2, NS3, NS4A, NS5A and the mature core protein. Interacts with host SLC3A2/4F2hc; the interaction may facilitate viral entry into host cell. Interacts with human PLSCR1. In terms of assembly, homohexamer. Homoheptamer. Interacts with protease NS2. As to quaternary structure, homodimer. Interacts with host SPCS1; this interaction is essential for viral particle assembly. Interacts with envelope glycoprotein E1. Interacts with envelope glycoprotein E2. Interacts with viroporin p7. Interacts with serine protease/helicase NS3. Part of the replication complex composed of NS2, NS3, NS4A, NS4B, NS5A and the RNA-directed RNA polymerase embedded in an ER-derived membranous web. Part of the viral assembly initiation complex composed of NS2, E1, E2, NS3, NS4A, NS5A and the mature core protein. Interacts with protease NS2. Interacts with non-structural protein 4A; this interaction stabilizes the folding of NS3 serine protease. NS3-NS4A interaction is essential for NS3 activation and allows membrane anchorage of the latter. NS3/NS4A complex also prevents phosphorylation of host IRF3, thus preventing the establishment of dsRNA induced antiviral state. Interacts with host MAVS; this interaction leads to the cleavage and inhibition of host MAVS. Interacts with host TICAM1; this interaction leads to the cleavage and inhibition of host TICAM1. Interacts with host TANK-binding kinase/TBK1; this interaction results in the inhibition of the association between TBK1 and IRF3, which leads to the inhibition of IRF3 activation. Interacts with host RBM24. Part of the replication complex composed of NS2, NS3, NS4A, NS4B, NS5A and the RNA-directed RNA polymerase embedded in an ER-derived membranous web. Part of the viral assembly initiation complex composed of NS2, E1, E2, NS3, NS4A, NS5A and the mature core protein. In terms of assembly, interacts with NS3 serine protease; this interaction stabilizes the folding of NS3 serine protease. NS3-NS4A interaction is essential for NS3 activation and allows membrane anchorage of the latter. Interacts with non-structural protein 5A (via N-terminus). Part of the replication complex composed of NS2, NS3, NS4A, NS4B, NS5A and the RNA-directed RNA polymerase embedded in an ER-derived membranous web. Part of the viral assembly initiation complex composed of NS2, E1, E2, NS3, NS4A, NS5A and the mature core protein. As to quaternary structure, homomultimer. Interacts with non-structural protein NS5A. Interacts with host PLA2G4C; this interaction likely initiates the recruitment of replication complexes to lipid droplets. Interacts with host STING; this interaction disrupts the interaction between STING and TBK1 thereby suppressing the interferon signaling. Part of the replication complex composed of NS2, NS3, NS4A, NS4B, NS5A and the RNA-directed RNA polymerase embedded in an ER-derived membranous web. Monomer. Homodimer; dimerization is required for RNA-binding. Interacts with the mature core protein. Interacts (via N-terminus) with non-structural protein 4A. Interacts with non-structural protein 4B. Interacts (via region D2) with RNA-directed RNA polymerase. Part of the viral assembly initiation complex composed of NS2, E1, E2, NS3, NS4A, NS5A and the mature core protein. Part of the replication complex composed of NS2, NS3, NS4A, NS4B, NS5A and the RNA-directed RNA polymerase embedded in an ER-derived membranous web. Interacts with host GRB2. Interacts with host BIN1. Interacts with host PIK3R1. Interacts with host SRCAP. Interacts with host FKBP8. Interacts (via C-terminus) with host VAPB (via MSP domain). Interacts with host EIF2AK2/PKR; this interaction leads to disruption of EIF2AK2 dimerization by NS5A and probably allows the virus to evade the innate immune response. Interacts (via N-terminus) with host PACSIN2 (via N-terminus); this interaction attenuates protein kinase C alpha-mediated phosphorylation of PACSIN2 by disrupting the interaction between PACSIN2 and PRKCA. Interacts (via N-terminus) with host SRC kinase (via SH2 domain). Interacts with most Src-family kinases. Interacts with host IFI27 and SKP2; promotes the ubiquitin-mediated proteasomal degradation of NS5A. Interacts with host GPS2. Interacts with host TNFRSF21; this interaction allows the modulation by the virus of JNK, p38 MAPK, STAT3, and Akt signaling pathways in a DR6-dependent manner. Interacts (via N-terminus) with host CIDEB (via N-terminus); this interaction seems to regulate the association of HCV particles with APOE. Interacts with host CHKA/Choline Kinase-alpha; CHKA bridges host PI4KA and NS5A and potentiates NS5A-stimulated PI4KA activity, which then facilitates the targeting of the ternary complex to the ER for viral replication. Interacts with host SPSB2 (via C-terminus); this interaction targets NS5A for ubiquitination and degradation. Interacts with host RAB18; this interaction may promote the association of NS5A and other replicase components with lipid droplets. Interacts (via region D2) with host PPIA/CYPA; the interaction stimulates RNA-binding ability of NS5A and is dependent on the peptidyl-prolyl cis-trans isomerase activity of PPIA/CYPA. Interacts with host TRIM14; this interaction induces the degradation of NS5A. In terms of assembly, homooligomer. Interacts with non-structural protein 5A. Interacts with host VAPB. Interacts with host PRK2/PKN2. Interacts with host HNRNPA1 and SEPT6; these interactions facilitate viral replication. Part of the replication complex composed of NS2, NS3, NS4A, NS4B, NS5A and the RNA-directed RNA polymerase. Requires Zn(2+) as cofactor. Mg(2+) is required as a cofactor. In terms of processing, specific enzymatic cleavages in vivo yield mature proteins. The structural proteins, core, E1, E2 and p7 are produced by proteolytic processing by host signal peptidases. The core protein precursor is synthesized as a 23 kDa, which is retained in the ER membrane through the hydrophobic signal peptide. Cleavage by the signal peptidase releases the 21 kDa mature core protein. The cleavage of the core protein precursor occurs between aminoacids 176 and 188 but the exact cleavage site is not known. Some degraded forms of the core protein appear as well during the course of infection. The other proteins (p7, NS2, NS3, NS4A, NS4B, NS5A and NS5B) are cleaved by the viral proteases. Autoprocessing between NS2 and NS3 is mediated by the NS2 cysteine protease catalytic domain and regulated by the NS3 N-terminal domain. Phosphorylated by host PKC and PKA. Post-translationally, ubiquitinated; mediated by UBE3A and leading to core protein subsequent proteasomal degradation. In terms of processing, highly N-glycosylated. Palmitoylation is required for NS2/3 autoprocessing and E2 recruitment to membranes. Post-translationally, palmitoylated. This modification may play a role in its polymerization or in protein-protein interactions. In terms of processing, phosphorylated on serines in a basal form termed p56. p58 is a hyperphosphorylated form of p56. p56 and p58 coexist in the cell in roughly equivalent amounts. Hyperphosphorylation is dependent on the presence of NS4A. Host CSNK1A1/CKI-alpha or RPS6KB1 kinases may be responsible for NS5A phosphorylation. Tyrosine phosphorylation is essential for the interaction with host SRC. Post-translationally, the N-terminus is phosphorylated by host PRK2/PKN2.

It is found in the host endoplasmic reticulum membrane. The protein resides in the host mitochondrion membrane. Its subcellular location is the virion. The protein localises to the host cytoplasm. It localises to the host nucleus. It is found in the host lipid droplet. The protein resides in the virion membrane. Its subcellular location is the host mitochondrion. The protein localises to the host cell membrane. It localises to the host perinuclear region. It carries out the reaction Hydrolysis of four peptide bonds in the viral precursor polyprotein, commonly with Asp or Glu in the P6 position, Cys or Thr in P1 and Ser or Ala in P1'.. The enzyme catalyses a ribonucleoside 5'-triphosphate + H2O = a ribonucleoside 5'-diphosphate + phosphate + H(+). It catalyses the reaction ATP + H2O = ADP + phosphate + H(+). The catalysed reaction is RNA(n) + a ribonucleoside 5'-triphosphate = RNA(n+1) + diphosphate. Inhibited by the antiviral drug hexamethylene amiloride. Inhibition by amantadine appears to be genotype-dependent. Also inhibited by long-alkyl-chain iminosugar derivatives. With respect to regulation, activity is up-regulated by PRK2/PKN2-mediated phosphorylation. Functionally, packages viral RNA to form a viral nucleocapsid, and promotes virion budding. Participates in the viral particle production as a result of its interaction with the non-structural protein 5A. Binds RNA and may function as a RNA chaperone to induce the RNA structural rearrangements taking place during virus replication. Modulates viral translation initiation by interacting with viral IRES and 40S ribosomal subunit. Affects various cell signaling pathways, host immunity and lipid metabolism. Prevents the establishment of cellular antiviral state by blocking the interferon-alpha/beta (IFN-alpha/beta) and IFN-gamma signaling pathways and by blocking the formation of phosphorylated STAT1 and promoting ubiquitin-mediated proteasome-dependent degradation of STAT1. Activates STAT3 leading to cellular transformation. Regulates the activity of cellular genes, including c-myc and c-fos. May repress the promoter of p53, and sequester CREB3 and SP110 isoform 3/Sp110b in the cytoplasm. Represses cell cycle negative regulating factor CDKN1A, thereby interrupting an important check point of normal cell cycle regulation. Targets transcription factors involved in the regulation of inflammatory responses and in the immune response: suppresses TNF-induced NF-kappa-B activation, and activates AP-1. Binds to dendritic cells (DCs) via C1QR1, resulting in down-regulation of T-lymphocytes proliferation. Alters lipid metabolism by interacting with hepatocellular proteins involved in lipid accumulation and storage. Induces up-regulation of FAS promoter activity, and thereby contributes to the increased triglyceride accumulation in hepatocytes (steatosis). In terms of biological role, forms a heterodimer with envelope glycoprotein E2, which mediates virus attachment to the host cell, virion internalization through clathrin-dependent endocytosis and fusion with host membrane. Fusion with the host cell is most likely mediated by both E1 and E2, through conformational rearrangements of the heterodimer required for fusion rather than a classical class II fusion mechanism. E1/E2 heterodimer binds host apolipoproteins such as APOB and ApoE thereby forming a lipo-viro-particle (LVP). APOE associated to the LVP allows the initial virus attachment to cell surface receptors such as the heparan sulfate proteoglycans (HSPGs), syndecan-1 (SDC1), syndecan-1 (SDC2), the low-density lipoprotein receptor (LDLR) and scavenger receptor class B type I (SCARB1). The cholesterol transfer activity of SCARB1 allows E2 exposure and binding of E2 to SCARB1 and the tetraspanin CD81. E1/E2 heterodimer binding on CD81 activates the epithelial growth factor receptor (EGFR) signaling pathway. Diffusion of the complex E1-E2-EGFR-SCARB1-CD81 to the cell lateral membrane allows further interaction with Claudin 1 (CLDN1) and occludin (OCLN) to finally trigger HCV entry. Forms a heterodimer with envelope glycoprotein E1, which mediates virus attachment to the host cell, virion internalization through clathrin-dependent endocytosis and fusion with host membrane. Fusion with the host cell is most likely mediated by both E1 and E2, through conformational rearrangements of the heterodimer required for fusion rather than a classical class II fusion mechanism. The interaction between envelope glycoprotein E2 and host apolipoprotein E/APOE allows the proper assembly, maturation and infectivity of the viral particles. This interaction is probably promoted via the up-regulation of cellular autophagy by the virus. E1/E2 heterodimer binds host apolipoproteins such as APOB and APOE thereby forming a lipo-viro-particle (LVP). APOE associated to the LVP allows the initial virus attachment to cell surface receptors such as the heparan sulfate proteoglycans (HSPGs), syndecan-1 (SDC1), syndecan-1 (SDC2), the low-density lipoprotein receptor (LDLR) and scavenger receptor class B type I (SCARB1). The cholesterol transfer activity of SCARB1 allows E2 exposure and binding of E2 to SCARB1 and the tetraspanin CD81. E1/E2 heterodimer binding on CD81 activates the epithelial growth factor receptor (EGFR) signaling pathway. Diffusion of the complex E1-E2-EGFR-SCARB1-CD81 to the cell lateral membrane allows further interaction with Claudin 1 (CLDN1) and occludin (OCLN) to finally trigger HCV entry. Inhibits host EIF2AK2/PKR activation, preventing the establishment of an antiviral state. Viral ligand for CD209/DC-SIGN and CLEC4M/DC-SIGNR, which are respectively found on dendritic cells (DCs), and on liver sinusoidal endothelial cells and macrophage-like cells of lymph node sinuses. These interactions allow the capture of circulating HCV particles by these cells and subsequent facilitated transmission to permissive cells such as hepatocytes and lymphocyte subpopulations. The interaction between E2 and host amino acid transporter complex formed by SLC3A2 and SLC7A5/LAT1 may facilitate viral entry into host cell. Its function is as follows. Ion channel protein that acts as a viroporin and plays an essential role in the assembly, envelopment and secretion of viral particles. Regulates the host cell secretory pathway, which induces the intracellular retention of viral glycoproteins and favors assembly of viral particles. Creates a pore in acidic organelles and releases Ca(2+) and H(+) in the cytoplasm of infected cells, leading to a productive viral infection. High levels of cytoplasmic Ca(2+) may trigger membrane trafficking and transport of viral ER-associated proteins to viroplasms, sites of viral genome replication. This ionic imbalance induces the assembly of the inflammasome complex, which triggers the maturation of pro-IL-1beta into IL-1beta through the action of caspase-1. Targets also host mitochondria and induces mitochondrial depolarization. In addition of its role as a viroporin, acts as a lipid raft adhesion factor. Functionally, cysteine protease required for the proteolytic auto-cleavage between the non-structural proteins NS2 and NS3. The N-terminus of NS3 is required for the function of NS2 protease (active region NS2-3). Promotes the initiation of viral particle assembly by mediating the interaction between structural and non-structural proteins. In terms of biological role, displays three enzymatic activities: serine protease with a chymotrypsin-like fold, NTPase and RNA helicase. NS3 serine protease, in association with NS4A, is responsible for the cleavages of NS3-NS4A, NS4A-NS4B, NS4B-NS5A and NS5A-NS5B. The NS3/NS4A complex prevents phosphorylation of host IRF3, thus preventing the establishment of dsRNA induced antiviral state. The NS3/NS4A complex induces host amino acid transporter component SLC3A2, thus contributing to HCV propagation. NS3 RNA helicase binds to RNA and unwinds both dsDNA and dsRNA in the 3' to 5' direction, and likely resolves RNA complicated stable secondary structures in the template strand. Binds a single ATP and catalyzes the unzipping of a single base pair of dsRNA. Inhibits host antiviral proteins TBK1 and IRF3 thereby preventing the establishment of an antiviral state. Cleaves host MAVS/CARDIF thereby preventing the establishment of an antiviral state. Cleaves host TICAM1/TRIF, thereby disrupting TLR3 signaling and preventing the establishment of an antiviral state. Induces a specific membrane alteration that serves as a scaffold for the virus replication complex. This membrane alteration gives rise to the so-called ER-derived membranous web that contains the replication complex. NS4B self-interaction contributes to its function in membranous web formation. Promotes host TRIF protein degradation in a CASP8-dependent manner thereby inhibiting host TLR3-mediated interferon signaling. Disrupts the interaction between STING and TBK1 contributing to the inhibition of interferon signaling. Its function is as follows. Phosphorylated protein that is indispensable for viral replication and assembly. Both hypo- and hyperphosphorylated states are required for the viral life cycle. The hyperphosphorylated form of NS5A is an inhibitor of viral replication. Involved in RNA-binding and especially in binding to the viral genome. Zinc is essential for RNA-binding. Participates in the viral particle production as a result of its interaction with the mature viral core protein. Its interaction with host VAPB may target the viral replication complex to vesicles. Down-regulates viral IRES translation initiation. Mediates interferon resistance, presumably by interacting with and inhibiting host EIF2AK2/PKR. Prevents BIN1-induced apoptosis. Acts as a transcriptional activator of some host genes important for viral replication when localized in the nucleus. Via the interaction with host PACSIN2, modulates lipid droplet formation in order to promote virion assembly. Modulates TNFRSF21/DR6 signaling pathway for viral propagation. Functionally, RNA-dependent RNA polymerase that performs primer-template recognition and RNA synthesis during viral replication. Initiates RNA transcription/replication at a flavin adenine dinucleotide (FAD), resulting in a 5'- FAD cap on viral RNAs. In this way, recognition of viral 5' RNA by host pattern recognition receptors can be bypassed, thereby evading activation of antiviral pathways. The sequence is that of Genome polyprotein from Hepatitis C virus genotype 5a (isolate EUH1480) (HCV).